We begin with the raw amino-acid sequence, 47 residues long: Wound-induced basic protein (47 aa).

The interval 1 to 47 (MIYDVNSPLFRSFLSQKGGSSDKRKTEEQKPKEHRPKASENKPIMTE) is disordered. The span at 20-40 (SSDKRKTEEQKPKEHRPKASE) shows a compositional bias: basic and acidic residues.

In terms of tissue distribution, abundant in radicals and epicotyls of seedlings and higher in the roots than in stems and leaves of mature plants.

The polypeptide is Wound-induced basic protein (PR4) (Phaseolus vulgaris (Kidney bean)).